The primary structure comprises 586 residues: Lamin-B1 (586 aa).

The segment at 1–31 (MATATPVPPRMGSRAGGPTTPLSPTRLSRLQ) is disordered. A2 carries the N-acetylalanine modification. The head stretch occupies residues 2 to 34 (ATATPVPPRMGSRAGGPTTPLSPTRLSRLQEKE). Residues T3 and T5 each carry the phosphothreonine modification. R14 is subject to Omega-N-methylarginine. A Phosphothreonine modification is found at T20. S23 is modified (phosphoserine). T25 carries the post-translational modification Phosphothreonine. S28 is modified (phosphoserine). The IF rod domain occupies 32–388 (EKEELRELND…KLLEGEEERL (357 aa)). Residues 35–69 (ELRELNDRLAVYIDKVRSLETENSALQLQVTEREE) form a coil 1A region. The tract at residues 70 to 81 (VRGRELTGLKAL) is linker 1. The segment at 82–215 (YETELADARR…EFRKSMYEEE (134 aa)) is coil 1B. A Glycyl lysine isopeptide (Lys-Gly) (interchain with G-Cter in SUMO2) cross-link involves residue K102. K111 carries the post-translational modification N6-acetyllysine. Residue K123 forms a Glycyl lysine isopeptide (Lys-Gly) (interchain with G-Cter in SUMO2) linkage. S126 bears the Phosphoserine mark. K145 is covalently cross-linked (Glycyl lysine isopeptide (Lys-Gly) (interchain with G-Cter in SUMO2)). K157 carries the post-translational modification N6-acetyllysine; alternate. K157 participates in a covalent cross-link: Glycyl lysine isopeptide (Lys-Gly) (interchain with G-Cter in SUMO2); alternate. Residue S158 is modified to Phosphoserine. Residue K181 forms a Glycyl lysine isopeptide (Lys-Gly) (interchain with G-Cter in SUMO2) linkage. Phosphoserine occurs at positions 200, 210, and 232. The segment at 216-243 (INETRRKHETRLVEVDSGRQIEYEYKLA) is linker 2. Residues K241 and K261 each participate in a glycyl lysine isopeptide (Lys-Gly) (interchain with G-Cter in SUMO2) cross-link. Residues 244–386 (QALHEMREQH…YRKLLEGEEE (143 aa)) are coil 2. Position 271 is an N6-acetyllysine; alternate (K271). Residue K271 forms a Glycyl lysine isopeptide (Lys-Gly) (interchain with G-Cter in SUMO2); alternate linkage. Residues S278 and S302 each carry the phosphoserine modification. Residue K312 forms a Glycyl lysine isopeptide (Lys-Gly) (interchain with G-Cter in SUMO2) linkage. The residue at position 330 (K330) is an N6-acetyllysine; alternate. K330 is covalently cross-linked (Glycyl lysine isopeptide (Lys-Gly) (interchain with G-Cter in SUMO2); alternate). Residues S375 and S393 each carry the phosphoserine modification. Residues 387-586 (RLKLSPSPSS…RASNRSCAIM (200 aa)) are tail. The tract at residues 388 to 432 (LKLSPSPSSRVTVSRASSSRSVRTTRGKRKRVDVEESEASSSVSI) is disordered. Residues 390 to 409 (LSPSPSSRVTVSRASSSRSV) are compositionally biased toward low complexity. O-linked (GlcNAc) threonine glycosylation occurs at T399. The residue at position 413 (R413) is an Omega-N-methylarginine. Residues 415–420 (KRKRVD) carry the Nuclear localization signal motif. The 117-residue stretch at 430-546 (VSISHSASAT…EEVAQRSTVF (117 aa)) folds into the LTD domain. Residue K483 is modified to N6-acetyllysine. A Glycyl lysine isopeptide (Lys-Gly) (interchain with G-Cter in SUMO2) cross-link involves residue K532. Residue S534 is modified to Phosphoserine. K547 is covalently cross-linked (Glycyl lysine isopeptide (Lys-Gly) (interchain with G-Cter in SUMO2)). At T575 the chain carries Phosphothreonine. The residue at position 583 (C583) is a Cysteine methyl ester. The S-farnesyl cysteine moiety is linked to residue C583. A propeptide spans 584–586 (AIM) (removed in mature form).

It belongs to the intermediate filament family. As to quaternary structure, homodimer. Lamin dimers then assemble into dimeric head-to-tail polymers. Ultimately, two head-to-tail polymers assemble laterally into a protofilament with a uniformly shaped rod of 3.5 nm in diameter. Interacts with SPAG4 and SEPT12. Post-translationally, B-type lamins undergo a series of modifications, such as farnesylation and phosphorylation. Increased phosphorylation of the lamins occurs before envelope disintegration and probably plays a role in regulating lamin associations. In terms of processing, phosphorylation plays a key role in lamin organization, subcellular localization and nuclear envelope disintegration. Phosphorylation by CDK1 at Ser-23 and Ser-393 at the onset of mitosis drives lamin disassembly and nuclear envelope breakdown.

Its subcellular location is the nucleus lamina. Lamins are intermediate filament proteins that assemble into a filamentous meshwork, and which constitute the major components of the nuclear lamina, a fibrous layer on the nucleoplasmic side of the inner nuclear membrane. Lamins provide a framework for the nuclear envelope, bridging the nuclear envelope and chromatin, thereby playing an important role in nuclear assembly, chromatin organization, nuclear membrane and telomere dynamics. The structural integrity of the lamina is strictly controlled by the cell cycle, as seen by the disintegration and formation of the nuclear envelope in prophase and telophase, respectively. This is Lamin-B1 (LMNB1) from Homo sapiens (Human).